Consider the following 330-residue polypeptide: Tryptophan--tRNA ligase (330 aa).

ATP contacts are provided by residues 10-12 (QTT) and 18-19 (GN). Positions 11–19 (TTGALHLGN) match the 'HIGH' region motif. Residue D134 coordinates L-tryptophan. ATP-binding positions include 146–148 (GED), I186, and 195–199 (KMSKS). Positions 195-199 (KMSKS) match the 'KMSKS' region motif.

This sequence belongs to the class-I aminoacyl-tRNA synthetase family. Homodimer.

It localises to the cytoplasm. The enzyme catalyses tRNA(Trp) + L-tryptophan + ATP = L-tryptophyl-tRNA(Trp) + AMP + diphosphate + H(+). Its function is as follows. Catalyzes the attachment of tryptophan to tRNA(Trp). This is Tryptophan--tRNA ligase from Rickettsia typhi (strain ATCC VR-144 / Wilmington).